A 503-amino-acid polypeptide reads, in one-letter code: GMP synthase [glutamine-hydrolyzing] (503 aa).

A Glutamine amidotransferase type-1 domain is found at 3–189 (PVLVVDFGSQ…AFLSSFAAPN (187 aa)). C80 (nucleophile) is an active-site residue. Residues H165 and E167 contribute to the active site. Residues 190-380 (WDPEQTICGT…LGIPKHIVHR (191 aa)) enclose the GMPS ATP-PPase domain. 217 to 223 (SGGVDSV) serves as a coordination point for ATP.

As to quaternary structure, homodimer.

The catalysed reaction is XMP + L-glutamine + ATP + H2O = GMP + L-glutamate + AMP + diphosphate + 2 H(+). It functions in the pathway purine metabolism; GMP biosynthesis; GMP from XMP (L-Gln route): step 1/1. In terms of biological role, catalyzes the synthesis of GMP from XMP. The protein is GMP synthase [glutamine-hydrolyzing] of Tropheryma whipplei (strain Twist) (Whipple's bacillus).